The following is a 347-amino-acid chain: SUMO-activating enzyme subunit 1 (347 aa).

This sequence belongs to the ubiquitin-activating E1 family. Heterodimer of sae1 and uba2/sae2. The heterodimer corresponds to the two domains that are encoded on a single polypeptide chain in ubiquitin-activating enzyme E1. Interacts with ube2i.

The protein resides in the nucleus. The protein operates within protein modification; protein sumoylation. In terms of biological role, the heterodimer acts as an E1 ligase for sumo1, sumo2, and sumo3. It mediates ATP-dependent activation of sumo proteins followed by formation of a thioester bond between a sumo protein and a conserved active site cysteine residue on uba2/sae2. This chain is SUMO-activating enzyme subunit 1 (sae1), found in Xenopus tropicalis (Western clawed frog).